A 225-amino-acid chain; its full sequence is UPF0758 protein SZO_09140 (225 aa).

An MPN domain is found at 102–224 (PVLSSAQVAE…YYSFREKSDL (123 aa)). Residues His173, His175, and Asp186 each contribute to the Zn(2+) site. Positions 173-186 (HNHPSGLTKPSAND) match the JAMM motif motif.

It belongs to the UPF0758 family.

The sequence is that of UPF0758 protein SZO_09140 from Streptococcus equi subsp. zooepidemicus (strain H70).